The sequence spans 147 residues: Hemoglobin anodic subunit beta (147 aa).

Positions 2-147 constitute a Globin domain; the sequence is EWTDGERTAI…VTSALARQYH (146 aa). Heme b contacts are provided by His-63 and His-92.

The protein belongs to the globin family. As to quaternary structure, heterotetramer of two alpha chains and two beta chains. Red blood cells.

In terms of biological role, involved in oxygen transport from gills to the various peripheral tissues. The sequence is that of Hemoglobin anodic subunit beta from Gymnothorax unicolor (Brown moray).